Consider the following 130-residue polypeptide: Small ribosomal subunit protein uS8 (130 aa).

The protein belongs to the universal ribosomal protein uS8 family. Part of the 30S ribosomal subunit. Contacts proteins S5 and S12.

Functionally, one of the primary rRNA binding proteins, it binds directly to 16S rRNA central domain where it helps coordinate assembly of the platform of the 30S subunit. The protein is Small ribosomal subunit protein uS8 of Phytoplasma mali (strain AT).